The chain runs to 268 residues: Interleukin-1 beta (268 aa).

A propeptide spanning residues 1 to 116 (MAEVPELASE…TRNNDACVHD (116 aa)) is cleaved from the precursor.

The protein belongs to the IL-1 family. Monomer. In its precursor form, weakly interacts with full-length MEFV; the mature cytokine does not interact at all. Interacts with integrins ITGAV:ITGBV and ITGA5:ITGB1; integrin-binding is required for IL1B signaling. Interacts with cargo receptor TMED10; the interaction is direct and is required for the secretion of IL1B mature form. Interacts with HSP90AB1; the interaction facilitates cargo translocation into the ERGIC. Interacts with HSP90B1; the interaction facilitates cargo translocation into the ERGIC.

It is found in the cytoplasm. Its subcellular location is the cytosol. The protein localises to the secreted. It localises to the lysosome. The protein resides in the extracellular exosome. Potent pro-inflammatory cytokine. Initially discovered as the major endogenous pyrogen, induces prostaglandin synthesis, neutrophil influx and activation, T-cell activation and cytokine production, B-cell activation and antibody production, and fibroblast proliferation and collagen production. Promotes Th17 differentiation of T-cells. Synergizes with IL12/interleukin-12 to induce IFNG synthesis from T-helper 1 (Th1) cells. Plays a role in angiogenesis by inducing VEGF production synergistically with TNF and IL6. Involved in transduction of inflammation downstream of pyroptosis: its mature form is specifically released in the extracellular milieu by passing through the gasdermin-D (GSDMD) pore. The protein is Interleukin-1 beta (IL1B) of Macaca fascicularis (Crab-eating macaque).